The chain runs to 438 residues: UPF0597 protein YE0448 (438 aa).

Belongs to the UPF0597 family.

The protein is UPF0597 protein YE0448 of Yersinia enterocolitica serotype O:8 / biotype 1B (strain NCTC 13174 / 8081).